The sequence spans 84 residues: Cytochrome b559 subunit alpha (84 aa).

The helical transmembrane segment at 22 to 36 (IIHSITIPSLFVSGW) threads the bilayer. H24 contacts heme.

It belongs to the PsbE/PsbF family. As to quaternary structure, heterodimer of an alpha subunit and a beta subunit. PSII is composed of 1 copy each of membrane proteins PsbA, PsbB, PsbC, PsbD, PsbE, PsbF, PsbH, PsbI, PsbJ, PsbK, PsbL, PsbM, PsbT, PsbX, PsbY, PsbZ, Psb30/Ycf12, at least 3 peripheral proteins of the oxygen-evolving complex and a large number of cofactors. It forms dimeric complexes. Heme b is required as a cofactor.

It localises to the plastid. The protein localises to the chloroplast thylakoid membrane. Its function is as follows. This b-type cytochrome is tightly associated with the reaction center of photosystem II (PSII). PSII is a light-driven water:plastoquinone oxidoreductase that uses light energy to abstract electrons from H(2)O, generating O(2) and a proton gradient subsequently used for ATP formation. It consists of a core antenna complex that captures photons, and an electron transfer chain that converts photonic excitation into a charge separation. This Phaeodactylum tricornutum (strain CCAP 1055/1) protein is Cytochrome b559 subunit alpha.